The chain runs to 280 residues: 2-C-methyl-D-erythritol 4-phosphate cytidylyltransferase (280 aa).

This sequence belongs to the IspD/TarI cytidylyltransferase family. IspD subfamily.

It catalyses the reaction 2-C-methyl-D-erythritol 4-phosphate + CTP + H(+) = 4-CDP-2-C-methyl-D-erythritol + diphosphate. The protein operates within isoprenoid biosynthesis; isopentenyl diphosphate biosynthesis via DXP pathway; isopentenyl diphosphate from 1-deoxy-D-xylulose 5-phosphate: step 2/6. Its function is as follows. Catalyzes the formation of 4-diphosphocytidyl-2-C-methyl-D-erythritol from CTP and 2-C-methyl-D-erythritol 4-phosphate (MEP). This chain is 2-C-methyl-D-erythritol 4-phosphate cytidylyltransferase, found in Psychrobacter cryohalolentis (strain ATCC BAA-1226 / DSM 17306 / VKM B-2378 / K5).